We begin with the raw amino-acid sequence, 631 residues long: Putative meiotic phospholipase SPO1 (631 aa).

Positions methionine 1–alanine 17 are cleaved as a signal peptide. The required for lipid-binding and function in meiosis stretch occupies residues glutamine 24–alanine 67. The PLA2c domain maps to glutamine 24–serine 631. Asparagine 233, asparagine 293, and asparagine 303 each carry an N-linked (GlcNAc...) asparagine glycan. A helical membrane pass occupies residues phenylalanine 376–alanine 396. N-linked (GlcNAc...) asparagine glycosylation is found at asparagine 500, asparagine 536, asparagine 560, asparagine 563, and asparagine 572.

It belongs to the lysophospholipase family. As to quaternary structure, interacts with SPO23. In terms of processing, glycosylated.

The protein resides in the endoplasmic reticulum membrane. It localises to the nucleus membrane. In terms of biological role, regulates spindle pole duplication in meiosis I, but not in mitosis. Required for meiosis I, meiosis II chromosome segregation and spore formation. Binds phosphatidylinositol (4)P mono- and polyphosphates. The chain is Putative meiotic phospholipase SPO1 (SPO1) from Saccharomyces cerevisiae (strain ATCC 204508 / S288c) (Baker's yeast).